A 382-amino-acid chain; its full sequence is Pentatricopeptide repeat-containing protein 2, mitochondrial (382 aa).

One copy of the PPR repeat lies at 159 to 193; the sequence is TSFNILMDMLFTKGQYERAVEVLVEMRNQRVRFSK.

It belongs to the PTCD2 family.

It is found in the mitochondrion. Its function is as follows. May be involved in mitochondrial RNA maturation and mitochondrial respiratory chain function. The polypeptide is Pentatricopeptide repeat-containing protein 2, mitochondrial (ptcd2) (Xenopus laevis (African clawed frog)).